The sequence spans 311 residues: Tyrosine recombinase XerD (311 aa).

Residues methionine 1 to isoleucine 83 enclose the Core-binding (CB) domain. One can recognise a Tyr recombinase domain in the interval lysine 104–leucine 299. Catalysis depends on residues arginine 145, lysine 176, histidine 251, arginine 254, and histidine 277. Tyrosine 286 functions as the O-(3'-phospho-DNA)-tyrosine intermediate in the catalytic mechanism.

It belongs to the 'phage' integrase family. XerD subfamily. In terms of assembly, forms a cyclic heterotetrameric complex composed of two molecules of XerC and two molecules of XerD.

It localises to the cytoplasm. Its function is as follows. Site-specific tyrosine recombinase, which acts by catalyzing the cutting and rejoining of the recombining DNA molecules. The XerC-XerD complex is essential to convert dimers of the bacterial chromosome into monomers to permit their segregation at cell division. It also contributes to the segregational stability of plasmids. The chain is Tyrosine recombinase XerD from Rickettsia prowazekii (strain Madrid E).